A 357-amino-acid polypeptide reads, in one-letter code: Eugenol O-methyltransferase (357 aa).

Residues G203, D226, D246, M247, and K260 each coordinate S-adenosyl-L-methionine. The Proton acceptor role is filled by H264.

It belongs to the class I-like SAM-binding methyltransferase superfamily. Cation-independent O-methyltransferase family. COMT subfamily. As to expression, specifically expressed in the peltate glandular trichomes on the surface of the young basil leaves.

The catalysed reaction is (E)-isoeugenol + S-adenosyl-L-methionine = (E)-isomethyleugenol + S-adenosyl-L-homocysteine + H(+). Its pathway is aromatic compound metabolism; phenylpropanoid biosynthesis. In terms of biological role, phenylpropene O-methyltransferase that catalyzes the methylation of the para-4-hydroxyl of eugenol to methyleugenol. Can also convert chavicol to methylchavicol but with less affinity. This is Eugenol O-methyltransferase (EOMT1) from Ocimum basilicum (Sweet basil).